A 113-amino-acid chain; its full sequence is Putative pterin-4-alpha-carbinolamine dehydratase (113 aa).

It belongs to the pterin-4-alpha-carbinolamine dehydratase family.

It catalyses the reaction (4aS,6R)-4a-hydroxy-L-erythro-5,6,7,8-tetrahydrobiopterin = (6R)-L-erythro-6,7-dihydrobiopterin + H2O. This is Putative pterin-4-alpha-carbinolamine dehydratase from Nitrosomonas eutropha (strain DSM 101675 / C91 / Nm57).